The primary structure comprises 308 residues: Elongation factor Ts (308 aa).

The interval 80-83 is involved in Mg(2+) ion dislocation from EF-Tu; sequence TDFV.

Belongs to the EF-Ts family.

It localises to the cytoplasm. Associates with the EF-Tu.GDP complex and induces the exchange of GDP to GTP. It remains bound to the aminoacyl-tRNA.EF-Tu.GTP complex up to the GTP hydrolysis stage on the ribosome. This Rhodopseudomonas palustris (strain BisB5) protein is Elongation factor Ts.